Consider the following 103-residue polypeptide: Pyrimidine/purine nucleoside phosphorylase (103 aa).

Belongs to the nucleoside phosphorylase PpnP family.

It catalyses the reaction a purine D-ribonucleoside + phosphate = a purine nucleobase + alpha-D-ribose 1-phosphate. The enzyme catalyses adenosine + phosphate = alpha-D-ribose 1-phosphate + adenine. The catalysed reaction is cytidine + phosphate = cytosine + alpha-D-ribose 1-phosphate. It carries out the reaction guanosine + phosphate = alpha-D-ribose 1-phosphate + guanine. It catalyses the reaction inosine + phosphate = alpha-D-ribose 1-phosphate + hypoxanthine. The enzyme catalyses thymidine + phosphate = 2-deoxy-alpha-D-ribose 1-phosphate + thymine. The catalysed reaction is uridine + phosphate = alpha-D-ribose 1-phosphate + uracil. It carries out the reaction xanthosine + phosphate = alpha-D-ribose 1-phosphate + xanthine. Catalyzes the phosphorolysis of diverse nucleosides, yielding D-ribose 1-phosphate and the respective free bases. Can use uridine, adenosine, guanosine, cytidine, thymidine, inosine and xanthosine as substrates. Also catalyzes the reverse reactions. This chain is Pyrimidine/purine nucleoside phosphorylase, found in Methylococcus capsulatus (strain ATCC 33009 / NCIMB 11132 / Bath).